We begin with the raw amino-acid sequence, 401 residues long: L-rhamnonate dehydratase (401 aa).

2 residues coordinate substrate: H29 and R55. Residues D222, E248, and E276 each coordinate Mg(2+). The active-site Proton acceptor is H325. E345 serves as a coordination point for substrate.

The protein belongs to the mandelate racemase/muconate lactonizing enzyme family. RhamD subfamily. As to quaternary structure, homooctamer; tetramer of dimers. It depends on Mg(2+) as a cofactor.

The enzyme catalyses L-rhamnonate = 2-dehydro-3-deoxy-L-rhamnonate + H2O. Functionally, catalyzes the dehydration of L-rhamnonate to 2-keto-3-deoxy-L-rhamnonate (KDR). This is L-rhamnonate dehydratase from Salmonella heidelberg (strain SL476).